We begin with the raw amino-acid sequence, 387 residues long: Large ribosomal subunit protein uL3 (387 aa).

It belongs to the universal ribosomal protein uL3 family.

Its subcellular location is the cytoplasm. The sequence is that of Large ribosomal subunit protein uL3 (RPL3) from Candida glabrata (strain ATCC 2001 / BCRC 20586 / JCM 3761 / NBRC 0622 / NRRL Y-65 / CBS 138) (Yeast).